The chain runs to 615 residues: Elongation factor 4 (615 aa).

The 183-residue stretch at 14 to 196 (AMIRNFCIIA…EIVRQVPAPV (183 aa)) folds into the tr-type G domain. Residues 26–31 (DHGKST) and 143–146 (NKID) each bind GTP.

Belongs to the TRAFAC class translation factor GTPase superfamily. Classic translation factor GTPase family. LepA subfamily.

It is found in the cell membrane. The enzyme catalyses GTP + H2O = GDP + phosphate + H(+). In terms of biological role, required for accurate and efficient protein synthesis under certain stress conditions. May act as a fidelity factor of the translation reaction, by catalyzing a one-codon backward translocation of tRNAs on improperly translocated ribosomes. Back-translocation proceeds from a post-translocation (POST) complex to a pre-translocation (PRE) complex, thus giving elongation factor G a second chance to translocate the tRNAs correctly. Binds to ribosomes in a GTP-dependent manner. The protein is Elongation factor 4 of Frankia alni (strain DSM 45986 / CECT 9034 / ACN14a).